The primary structure comprises 334 residues: MKQVVYIANSESKNIEVWNLCKSGKMNLIQKIETDGKIQPINIIQKRNLLYAGIFPDNKIITYSINHNGFLEKKNESNIPGKANYISFDKKKEFLFCSSYHSNFISVSPLNKFGIPQNPIQIIYNIEGCHAAKMNYKYNILFVISLKEDCIYLYYLTDFGILKSTEQNILHTQKKSGPRHIIFHPNQDFVYTINELNGTIDVWKIYKKNNVIKVKNIQNIHVLKNRFLKDYWCSDIHITSCGRFLYACDRFFNIISLFHINQNDNKLVFFKSYDTEEQPRSFNINSHNTHLIVAGEKSNTFIIYSISNSTGELKKINVYSTGQRPVWILIHALC.

Belongs to the cycloisomerase 2 family.

It catalyses the reaction 6-phospho-D-glucono-1,5-lactone + H2O = 6-phospho-D-gluconate + H(+). It participates in carbohydrate degradation; pentose phosphate pathway; D-ribulose 5-phosphate from D-glucose 6-phosphate (oxidative stage): step 2/3. Catalyzes the hydrolysis of 6-phosphogluconolactone to 6-phosphogluconate. This Buchnera aphidicola subsp. Acyrthosiphon pisum (strain 5A) protein is 6-phosphogluconolactonase.